Consider the following 86-residue polypeptide: DNA-directed RNA polymerase subunit omega (86 aa).

This sequence belongs to the RNA polymerase subunit omega family. In terms of assembly, the RNAP catalytic core consists of 2 alpha, 1 beta, 1 beta' and 1 omega subunit. When a sigma factor is associated with the core the holoenzyme is formed, which can initiate transcription.

It catalyses the reaction RNA(n) + a ribonucleoside 5'-triphosphate = RNA(n+1) + diphosphate. Promotes RNA polymerase assembly. Latches the N- and C-terminal regions of the beta' subunit thereby facilitating its interaction with the beta and alpha subunits. This Agathobacter rectalis (strain ATCC 33656 / DSM 3377 / JCM 17463 / KCTC 5835 / VPI 0990) (Eubacterium rectale) protein is DNA-directed RNA polymerase subunit omega.